Reading from the N-terminus, the 192-residue chain is Protein ORF45 (192 aa).

Its function is as follows. Plays a role in the expression of ORF41, which itself is required for late gene expression. In Autographa californica nuclear polyhedrosis virus (AcMNPV), this protein is Protein ORF45.